A 380-amino-acid polypeptide reads, in one-letter code: Elongation factor Ts, mitochondrial (380 aa).

It belongs to the EF-Ts family.

The protein localises to the mitochondrion. Associates with the EF-Tu.GDP complex and induces the exchange of GDP to GTP. It remains bound to the aminoacyl-tRNA.EF-Tu.GTP complex up to the GTP hydrolysis stage on the ribosome. This is Elongation factor Ts, mitochondrial from Plasmodium chabaudi chabaudi.